We begin with the raw amino-acid sequence, 108 residues long: Long neurotoxin 43 (108 aa).

The signal sequence occupies residues 1–21; it reads MKTLLLTLVVVTIVCLDLAYT. 5 cysteine pairs are disulfide-bonded: C24-C42, C35-C63, C48-C52, C67-C78, and C79-C84.

Belongs to the three-finger toxin family. Long-chain subfamily. Type II alpha-neurotoxin sub-subfamily. In terms of tissue distribution, expressed by the venom gland.

It localises to the secreted. In terms of biological role, binds with high affinity to muscular (alpha-1/CHRNA1) and neuronal (alpha-7/CHRNA7) nicotinic acetylcholine receptor (nAChR) and inhibits acetylcholine from binding to the receptor, thereby impairing neuromuscular and neuronal transmission. This is Long neurotoxin 43 from Drysdalia coronoides (White-lipped snake).